We begin with the raw amino-acid sequence, 230 residues long: MTDDDRIKLEPSWKAALRGEFDQPYMHQLREFLRGEYAAGKEIYPPGPLIFNALNSTPLDQVKVVILGQDPYHGPGQAHGLCFSVQPGVATPPSLVNIYKELQRDLNIPIASHGYLQSWAEQGVLLLNTTMTVERANAASHAKKGWEFFTDRVIQVVSEQCPNVVFLLWGAHAQSKQKLIDGTKHLVLKSVHPSPLSAYRGFLGCGHFSRTNSFLEQRGMAPINWALPPL.

D70 acts as the Proton acceptor in catalysis.

The protein belongs to the uracil-DNA glycosylase (UDG) superfamily. UNG family.

It is found in the cytoplasm. The enzyme catalyses Hydrolyzes single-stranded DNA or mismatched double-stranded DNA and polynucleotides, releasing free uracil.. Functionally, excises uracil residues from the DNA which can arise as a result of misincorporation of dUMP residues by DNA polymerase or due to deamination of cytosine. This chain is Uracil-DNA glycosylase, found in Pseudomonas putida (strain GB-1).